A 317-amino-acid polypeptide reads, in one-letter code: Taste receptor type 2 member 14 (317 aa).

Topologically, residues 1–7 (MGGVIKS) are extracellular. The helical transmembrane segment at 8–28 (IFTFVLIVEFIIGNLGNSFIA) threads the bilayer. The Cytoplasmic segment spans residues 29 to 55 (LVNCIDWVKGRKISSVDRILTALAISK). Residues 56–76 (ISLVWLIFGSWCVSVFFPALF) form a helical membrane-spanning segment. At 77 to 87 (ATEKMFRMLTN) the chain is on the extracellular side. Cholesterol is bound by residues Thr86 and Trp89. A helical membrane pass occupies residues 88–108 (IWTVINHFSVWLATGLGTFYF). The Cytoplasmic segment spans residues 109 to 129 (LKIANFSNSIFLYLKWRVKKV). The chain crosses the membrane as a helical span at residues 130-150 (VLVLLLVTSVFLFLNIALINI). The Extracellular segment spans residues 151-184 (HINASINGYRRNKTCSSDSSNFTRFSSLIVLTST). 3 N-linked (GlcNAc...) asparagine glycosylation sites follow: Asn153, Asn162, and Asn171. Residue Val180 participates in cholesterol binding. The helical transmembrane segment at 185–205 (VFIFIPFTLSLAMFLLLIFSX) threads the bilayer. The Cytoplasmic portion of the chain corresponds to 206 to 232 (WKHRKKMQHTVKRSGDASTKAHRGVKS). A helical membrane pass occupies residues 233-253 (VXTFFLLYAIFCLSFFISVWT). Residues 254-261 (SERLEENL) are Extracellular-facing. Residues 262–282 (IILSQVMGMAYPSCHSCVLIL) form a helical membrane-spanning segment. Positions 265 and 268 each coordinate cholesterol. The Cytoplasmic segment spans residues 283–317 (GNKKLRQASLSVLLWLRYMFKDGEPSGHKEFRESS).

It belongs to the G-protein coupled receptor T2R family. In terms of assembly, core component of the TAS2R14-GNAI1 complex, consisting of TAS2R14, GNAI1, GNB1 and GNG2; within the complex interacts with GNAI1. Core component of the TAS2R14-GNAT3 complex, consisting of TAS2R14, GNAT3, GNB1 and GNG2; within the complex interacts with GNAT3. Core component of the TAS2R14-GNAS2 complex, consisting of TAS2R14, GNAS2, GNB1 and GNG2; within the complex interacts with GNAS2.

It localises to the membrane. It catalyses the reaction Ca(2+)(in) = Ca(2+)(out). The enzyme catalyses 3',5'-cyclic AMP(in) = 3',5'-cyclic AMP(out). With respect to regulation, basal activity is enhanced by binding to bitter tastants, such as flufenamic acid and aristolochic acid. Regulated by cholesterol in a concentration-dependent manner. In terms of biological role, gustducin-linked G-protein coupled receptor that plays a role in the perception of bitterness. The activity of this receptor stimulates GNAT3, activating the gustducin G-protein pathway. Likely plays a role in sensing the chemical composition of the gastrointestinal content and other extra-oral tissues via the inhibitory G-protein pathways. The sequence is that of Taste receptor type 2 member 14 (TAS2R14) from Pan troglodytes (Chimpanzee).